The sequence spans 323 residues: Lipoyl synthase (323 aa).

Residues cysteine 53, cysteine 58, cysteine 64, cysteine 79, cysteine 83, cysteine 86, and serine 293 each contribute to the [4Fe-4S] cluster site. The region spanning 65–282 is the Radical SAM core domain; that stretch reads WTKKQATVMI…AATARAKGFS (218 aa).

This sequence belongs to the radical SAM superfamily. Lipoyl synthase family. The cofactor is [4Fe-4S] cluster.

It localises to the cytoplasm. The enzyme catalyses [[Fe-S] cluster scaffold protein carrying a second [4Fe-4S](2+) cluster] + N(6)-octanoyl-L-lysyl-[protein] + 2 oxidized [2Fe-2S]-[ferredoxin] + 2 S-adenosyl-L-methionine + 4 H(+) = [[Fe-S] cluster scaffold protein] + N(6)-[(R)-dihydrolipoyl]-L-lysyl-[protein] + 4 Fe(3+) + 2 hydrogen sulfide + 2 5'-deoxyadenosine + 2 L-methionine + 2 reduced [2Fe-2S]-[ferredoxin]. Its pathway is protein modification; protein lipoylation via endogenous pathway; protein N(6)-(lipoyl)lysine from octanoyl-[acyl-carrier-protein]: step 2/2. Catalyzes the radical-mediated insertion of two sulfur atoms into the C-6 and C-8 positions of the octanoyl moiety bound to the lipoyl domains of lipoate-dependent enzymes, thereby converting the octanoylated domains into lipoylated derivatives. The sequence is that of Lipoyl synthase from Zymomonas mobilis subsp. mobilis (strain ATCC 31821 / ZM4 / CP4).